Reading from the N-terminus, the 2149-residue chain is Non-reducing polyketide synthase PvBS090_009107 (2149 aa).

Residues 8–244 (YLFGDQTGEF…VRVPVHAPYH (237 aa)) are N-terminal acylcarrier protein transacylase domain (SAT). A Ketosynthase family 3 (KS3) domain is found at 375 to 806 (QSKIAIIGLS…GGNTALLIED (432 aa)). Catalysis depends on for beta-ketoacyl synthase activity residues C547, H682, and H724. The malonyl-CoA:ACP transacylase (MAT) domain stretch occupies residues 911–1231 (FVFTGQGAQY…LSAIYLAGVD (321 aa)). S1000 acts as the For acyl/malonyl transferase activity in catalysis. The segment at 1290–1604 (TTSVQRIVET…RQVLNTVLPP (315 aa)) is product template (PT) domain. An N-terminal hotdog fold region spans residues 1294-1426 (QRIVETRDEG…CLVKFSDTHL (133 aa)). Residues 1294 to 1599 (QRIVETRDEG…FQGVPRQVLN (306 aa)) enclose the PKS/mFAS DH domain. Catalysis depends on H1326, which acts as the Proton acceptor; for dehydratase activity. Residues 1454–1599 (SHRMHRGMFY…FQGVPRQVLN (146 aa)) form a C-terminal hotdog fold region. D1512 (proton donor; for dehydratase activity) is an active-site residue. Residues 1604-1631 (PAGGSKAAPRTTARAVPPPPINVEKPKS) are disordered. Residues 1649 to 1726 (SAGPSVLVQA…DLKQLLSQAS (78 aa)) form the Carrier 1 domain. An O-(pantetheine 4'-phosphoryl)serine modification is found at S1686. 2 stretches are compositionally biased toward low complexity: residues 1722–1731 (LSQASPSDSS) and 1744–1755 (SSSTEPSTPGTP). Residues 1722–1763 (LSQASPSDSSDSSEESHYSFRDSSSTEPSTPGTPAFFSPKRG) are disordered. A Carrier 2 domain is found at 1769–1846 (VGESETIKTI…AVETALDLKP (78 aa)). At S1806 the chain carries O-(pantetheine 4'-phosphoryl)serine. A thioesterase (TE) domain region spans residues 1875 to 2147 (STHPPATSIL…KLSAFIGRAM (273 aa)). S1965 (for thioesterase activity) is an active-site residue.

The enzyme catalyses 6 malonyl-CoA + acetyl-CoA + 6 H(+) = naphtopyrone YWA1 + 6 CO2 + 7 CoA + H2O. It participates in secondary metabolite biosynthesis. The protein operates within pigment biosynthesis. In terms of biological role, non-reducing polyketide synthase; part of the gene cluster 24 that mediates the biosynthesis of a pigment with an aromatic structure protecting the pigmented fungus from both ionizing and non-ionizing radiations based on a mechanism similar to melanin, that is, free radical quenching and spherical spatial arrangement. Catalyzes the biosynthesis of the gamma-naphthopyrone precursor YWA1, via condensation of one acetyl-CoA starter unit with 6 malonyl-CoA units. YWA1 is probably further processed by the additional enzymes present within the cluster 24, however these additional steps have not been characterized yet. YWA1 is not converted to DHN-melanin in Byssochlamys spectabilis since the use of the DHN-melanin pathway inhibitor pyroquilon does not result in a loss of pigmentation. This chain is Non-reducing polyketide synthase PvBS090_009107, found in Byssochlamys spectabilis (Paecilomyces variotii).